The primary structure comprises 129 residues: Large ribosomal subunit protein uL22 (129 aa).

Belongs to the universal ribosomal protein uL22 family. Part of the 50S ribosomal subunit.

Its function is as follows. This protein binds specifically to 23S rRNA; its binding is stimulated by other ribosomal proteins, e.g. L4, L17, and L20. It is important during the early stages of 50S assembly. It makes multiple contacts with different domains of the 23S rRNA in the assembled 50S subunit and ribosome. Functionally, the globular domain of the protein is located near the polypeptide exit tunnel on the outside of the subunit, while an extended beta-hairpin is found that lines the wall of the exit tunnel in the center of the 70S ribosome. This chain is Large ribosomal subunit protein uL22, found in Brucella abortus (strain 2308).